The primary structure comprises 747 residues: NAD(P)H-quinone oxidoreductase subunit 5, chloroplastic (747 aa).

16 helical membrane passes run Trp9 to Phe29, Trp40 to Ile60, Ile89 to Ile109, Phe125 to Ile145, Val147 to Thr167, Gly185 to Phe205, Asn219 to Ala239, Thr258 to Ala278, Leu280 to Ile300, Leu327 to Ile347, Ala354 to Ser374, Thr396 to Ser416, Trp425 to Tyr445, Leu552 to Phe572, Phe606 to Phe626, and Tyr727 to Ile747.

Belongs to the complex I subunit 5 family. As to quaternary structure, NDH is composed of at least 16 different subunits, 5 of which are encoded in the nucleus.

It localises to the plastid. The protein localises to the chloroplast thylakoid membrane. The catalysed reaction is a plastoquinone + NADH + (n+1) H(+)(in) = a plastoquinol + NAD(+) + n H(+)(out). The enzyme catalyses a plastoquinone + NADPH + (n+1) H(+)(in) = a plastoquinol + NADP(+) + n H(+)(out). In terms of biological role, NDH shuttles electrons from NAD(P)H:plastoquinone, via FMN and iron-sulfur (Fe-S) centers, to quinones in the photosynthetic chain and possibly in a chloroplast respiratory chain. The immediate electron acceptor for the enzyme in this species is believed to be plastoquinone. Couples the redox reaction to proton translocation, and thus conserves the redox energy in a proton gradient. In Lotus japonicus (Lotus corniculatus var. japonicus), this protein is NAD(P)H-quinone oxidoreductase subunit 5, chloroplastic (ndhF).